A 329-amino-acid polypeptide reads, in one-letter code: NADH-quinone oxidoreductase subunit H (329 aa).

The next 9 helical transmembrane spans lie at 9–29, 42–62, 75–95, 117–137, 154–174, 188–208, 238–258, 269–291, and 309–329; these read LIKILILVAVFSALGGFATYI, GPCYVGPFGLLQVAADGIKLF, FIFTLAPIIAMVSAFVSMAPI, IGFLFFLAVGSAGIYAPILAG, IQLLSFEVVSTLTILAPLMVV, GGFLDWLVFKQPLAFVLFLIA, LKWGMFFLAEYAHLFAFSFVI, WGFIPGGIAILIKAGFFVFLSMW, and WKIMLPLALLNIVLTGIVILI.

The protein belongs to the complex I subunit 1 family. NDH-1 is composed of 14 different subunits. Subunits NuoA, H, J, K, L, M, N constitute the membrane sector of the complex.

It is found in the cell inner membrane. It carries out the reaction a quinone + NADH + 5 H(+)(in) = a quinol + NAD(+) + 4 H(+)(out). NDH-1 shuttles electrons from NADH, via FMN and iron-sulfur (Fe-S) centers, to quinones in the respiratory chain. The immediate electron acceptor for the enzyme in this species is believed to be ubiquinone. Couples the redox reaction to proton translocation (for every two electrons transferred, four hydrogen ions are translocated across the cytoplasmic membrane), and thus conserves the redox energy in a proton gradient. This subunit may bind ubiquinone. The sequence is that of NADH-quinone oxidoreductase subunit H from Helicobacter pylori (strain J99 / ATCC 700824) (Campylobacter pylori J99).